The sequence spans 772 residues: Polyribonucleotide nucleotidyltransferase (772 aa).

D488 and D494 together coordinate Mg(2+). Residues 555 to 614 form the KH domain; sequence PRLTTLKINPEKIRDVIGKGGAVIRGLQEETGTTINIDEDGTITIASTDPEKAEFAKKRI. The S1 motif domain maps to 624 to 692; that stretch reads GKVYEGPVTK…EKGRVKLSMK (69 aa). The segment at 690–772 is disordered; the sequence is SMKALTERPA…QPYAPRDSQE (83 aa). Positions 703–740 are enriched in basic and acidic residues; the sequence is YSERPPREDRGDRGDRGGERRERSDRGDRGGDRGERAP. Residues 743-757 show a composition bias toward low complexity; sequence NSEQQQQPRSNEQQP.

This sequence belongs to the polyribonucleotide nucleotidyltransferase family. The cofactor is Mg(2+).

It is found in the cytoplasm. The enzyme catalyses RNA(n+1) + phosphate = RNA(n) + a ribonucleoside 5'-diphosphate. Involved in mRNA degradation. Catalyzes the phosphorolysis of single-stranded polyribonucleotides processively in the 3'- to 5'-direction. The protein is Polyribonucleotide nucleotidyltransferase of Variovorax paradoxus (strain S110).